Consider the following 173-residue polypeptide: Adenine phosphoribosyltransferase (173 aa).

Belongs to the purine/pyrimidine phosphoribosyltransferase family. In terms of assembly, homodimer.

It is found in the cytoplasm. It carries out the reaction AMP + diphosphate = 5-phospho-alpha-D-ribose 1-diphosphate + adenine. Its pathway is purine metabolism; AMP biosynthesis via salvage pathway; AMP from adenine: step 1/1. Its function is as follows. Catalyzes a salvage reaction resulting in the formation of AMP, that is energically less costly than de novo synthesis. This Solibacter usitatus (strain Ellin6076) protein is Adenine phosphoribosyltransferase.